A 471-amino-acid polypeptide reads, in one-letter code: 3-isopropylmalate dehydratase large subunit (471 aa).

[4Fe-4S] cluster-binding residues include cysteine 347, cysteine 407, and cysteine 410.

This sequence belongs to the aconitase/IPM isomerase family. LeuC type 1 subfamily. In terms of assembly, heterodimer of LeuC and LeuD. [4Fe-4S] cluster is required as a cofactor.

The enzyme catalyses (2R,3S)-3-isopropylmalate = (2S)-2-isopropylmalate. It functions in the pathway amino-acid biosynthesis; L-leucine biosynthesis; L-leucine from 3-methyl-2-oxobutanoate: step 2/4. Catalyzes the isomerization between 2-isopropylmalate and 3-isopropylmalate, via the formation of 2-isopropylmaleate. The protein is 3-isopropylmalate dehydratase large subunit of Buchnera aphidicola subsp. Acyrthosiphon pisum (strain APS) (Acyrthosiphon pisum symbiotic bacterium).